The chain runs to 314 residues: 3'-5' exoribonuclease YhaM (314 aa).

Residues 163-279 (HVVSMLDLAK…LHYIDNLDAK (117 aa)) enclose the HD domain.

It belongs to the YhaM family.

Its function is as follows. Shows a 3'-5' exoribonuclease activity. This Bacillus anthracis (strain CDC 684 / NRRL 3495) protein is 3'-5' exoribonuclease YhaM.